Consider the following 416-residue polypeptide: Carboxypeptidase B (416 aa).

Residues 1–15 (MAFLILVTLALASAH) form the signal peptide. The propeptide at 16–109 (YSGEHFEGEK…LEGQFGRQVP (94 aa)) is activation peptide. The region spanning 117 to 411 (KYNRWETIEA…LAIKHLARYV (295 aa)) is the Peptidase M14 domain. 2 residues coordinate Zn(2+): His175 and Glu178. Residues 175 to 178 (HARE), Arg233, and 250 to 251 (TR) each bind substrate. 2 disulfide bridges follow: Cys244–Cys267 and Cys258–Cys272. Zn(2+) is bound at residue His303. Residues 304-305 (SY) and Tyr355 contribute to the substrate site. The Proton donor/acceptor role is filled by Glu377.

The protein belongs to the peptidase M14 family. It depends on Zn(2+) as a cofactor.

It is found in the secreted. It localises to the zymogen granule lumen. It carries out the reaction Preferential release of a C-terminal lysine or arginine amino acid.. This chain is Carboxypeptidase B (CPB1), found in Canis lupus familiaris (Dog).